The chain runs to 146 residues: Late protein H7 (146 aa).

Residues 10 to 32 traverse the membrane as a helical segment; the sequence is LAMTAFFGELNTLDIMALIMSIF.

Belongs to the chordopoxvirinae H7 family.

Its subcellular location is the membrane. Functionally, contributes to the formation of crescents and immature virions (IV). The protein is Late protein H7 of Vaccinia virus (strain Tian Tan) (VACV).